The chain runs to 109 residues: Co-chaperonin GroES (109 aa).

Belongs to the GroES chaperonin family. As to quaternary structure, heptamer of 7 subunits arranged in a ring. Interacts with the chaperonin GroEL.

The protein localises to the cytoplasm. In terms of biological role, together with the chaperonin GroEL, plays an essential role in assisting protein folding. The GroEL-GroES system forms a nano-cage that allows encapsulation of the non-native substrate proteins and provides a physical environment optimized to promote and accelerate protein folding. GroES binds to the apical surface of the GroEL ring, thereby capping the opening of the GroEL channel. This chain is Co-chaperonin GroES, found in Methanosarcina acetivorans (strain ATCC 35395 / DSM 2834 / JCM 12185 / C2A).